Reading from the N-terminus, the 23-residue chain is Paralytic peptide 2 (23 aa).

Residues Cys7 and Cys19 are joined by a disulfide bond.

Belongs to the GBP/PSP1/paralytic peptide family. Hemolymph.

Functionally, causes rapid, rigid paralysis when injected into Lepidopteran larvae. The physiological role may be to reduce hemolymph loss following injury and promote wound healing. The sequence is that of Paralytic peptide 2 from Spodoptera exigua (Beet armyworm).